A 179-amino-acid polypeptide reads, in one-letter code: Ubiquinol-cytochrome c reductase iron-sulfur subunit (179 aa).

Residues 14-35 form a helical membrane-spanning segment; that stretch reads FLYVATAAVGAAGVAAVAWPFI. One can recognise a Rieske domain in the interval 80-173; it reads AKEIQSEEAA…YEFVDNTKIR (94 aa). [2Fe-2S] cluster contacts are provided by cysteine 118, histidine 120, cysteine 137, and histidine 140. The cysteines at positions 123 and 139 are disulfide-linked.

Belongs to the Rieske iron-sulfur protein family. The main subunits of complex b-c1 are: cytochrome b, cytochrome c1 and the Rieske protein. The cofactor is [2Fe-2S] cluster.

The protein resides in the cell membrane. The enzyme catalyses a quinol + 2 Fe(III)-[cytochrome c](out) = a quinone + 2 Fe(II)-[cytochrome c](out) + 2 H(+)(out). Functionally, component of the ubiquinol-cytochrome c reductase complex (complex III or cytochrome b-c1 complex), which is a respiratory chain that generates an electrochemical potential coupled to ATP synthesis. This Blastochloris viridis (Rhodopseudomonas viridis) protein is Ubiquinol-cytochrome c reductase iron-sulfur subunit (petA).